Consider the following 375-residue polypeptide: Chaperone protein DnaJ (375 aa).

The 66-residue stretch at 5–70 folds into the J domain; it reads DYYEVLGVAR…NKRRAYDAHG (66 aa). A CR-type zinc finger spans residues 131 to 208; it reads GIERRIEIPT…CHGAGRVEED (78 aa). Residues Cys144, Cys147, Cys160, Cys163, Cys182, Cys185, Cys196, and Cys199 each contribute to the Zn(2+) site. CXXCXGXG motif repeat units follow at residues 144–151, 160–167, 182–189, and 196–203; these read CAPCHGSG, CGTCHGRG, CPHCDGRG, and CKTCHGAG.

Belongs to the DnaJ family. In terms of assembly, homodimer. Zn(2+) serves as cofactor.

Its subcellular location is the cytoplasm. Its function is as follows. Participates actively in the response to hyperosmotic and heat shock by preventing the aggregation of stress-denatured proteins and by disaggregating proteins, also in an autonomous, DnaK-independent fashion. Unfolded proteins bind initially to DnaJ; upon interaction with the DnaJ-bound protein, DnaK hydrolyzes its bound ATP, resulting in the formation of a stable complex. GrpE releases ADP from DnaK; ATP binding to DnaK triggers the release of the substrate protein, thus completing the reaction cycle. Several rounds of ATP-dependent interactions between DnaJ, DnaK and GrpE are required for fully efficient folding. Also involved, together with DnaK and GrpE, in the DNA replication of plasmids through activation of initiation proteins. This is Chaperone protein DnaJ from Xanthomonas axonopodis pv. citri (strain 306).